The following is a 141-amino-acid chain: Nucleoside diphosphate kinase (141 aa).

The ATP site is built by Lys11, Phe59, Arg87, Thr93, Arg104, and Asn114. The Pros-phosphohistidine intermediate role is filled by His117.

This sequence belongs to the NDK family. As to quaternary structure, homotetramer. Mg(2+) is required as a cofactor.

It localises to the cytoplasm. It catalyses the reaction a 2'-deoxyribonucleoside 5'-diphosphate + ATP = a 2'-deoxyribonucleoside 5'-triphosphate + ADP. It carries out the reaction a ribonucleoside 5'-diphosphate + ATP = a ribonucleoside 5'-triphosphate + ADP. Functionally, major role in the synthesis of nucleoside triphosphates other than ATP. The ATP gamma phosphate is transferred to the NDP beta phosphate via a ping-pong mechanism, using a phosphorylated active-site intermediate. The polypeptide is Nucleoside diphosphate kinase (Verminephrobacter eiseniae (strain EF01-2)).